Reading from the N-terminus, the 510-residue chain is Cytochrome P450 4A6 (510 aa).

Positions 1–4 (MSVS) are excised as a propeptide. 2 residues coordinate heme: Glu-321 and Cys-457.

This sequence belongs to the cytochrome P450 family. The cofactor is heme. Liver; kidney.

It localises to the endoplasmic reticulum membrane. It is found in the microsome membrane. The catalysed reaction is an omega-methyl-long-chain fatty acid + reduced [NADPH--hemoprotein reductase] + O2 = an omega-hydroxy-long-chain fatty acid + oxidized [NADPH--hemoprotein reductase] + H2O + H(+). In terms of biological role, cytochromes P450 are a group of heme-thiolate monooxygenases. In liver microsomes, this enzyme is involved in an NADPH-dependent electron transport pathway. It oxidizes a variety of structurally unrelated compounds, including steroids, fatty acids, and xenobiotics. Functionally, the kidney P-450 system is rather specialized for the omega-hydroxylation of fatty acids. Both P450-KA1 and P450-KA2 catalyze the omega- and (omega-1)-hydroxylation of various fatty acids with no drug-metabolizing activity, and hydroxylate prostaglandin A1 and A2 solely at the omega-position. In Oryctolagus cuniculus (Rabbit), this protein is Cytochrome P450 4A6 (CYP4A6).